The chain runs to 208 residues: Protein late bloomer (208 aa).

4 helical membrane passes run 10–30 (IASI…IGWI), 41–61 (FVIA…LGIF), 67–87 (SVVL…LQIV), and 174–194 (FIIV…LAVF).

The protein belongs to the tetraspanin (TM4SF) family. Transiently expressed on motor axons, growth cones and terminal arbors.

The protein localises to the membrane. It is found in the synapse. Its function is as follows. Facilitates synapse formation. The polypeptide is Protein late bloomer (lbm) (Drosophila melanogaster (Fruit fly)).